A 355-amino-acid polypeptide reads, in one-letter code: 3-dehydroquinate synthase (355 aa).

Residues 67-72 (DGEIYK), 101-105 (GVIGD), 125-126 (TT), Lys-138, Lys-147, and 165-168 (FLNT) each bind NAD(+). Zn(2+)-binding residues include Glu-180, His-243, and His-260.

This sequence belongs to the sugar phosphate cyclases superfamily. Dehydroquinate synthase family. NAD(+) serves as cofactor. Co(2+) is required as a cofactor. Requires Zn(2+) as cofactor.

The protein localises to the cytoplasm. The enzyme catalyses 7-phospho-2-dehydro-3-deoxy-D-arabino-heptonate = 3-dehydroquinate + phosphate. Its pathway is metabolic intermediate biosynthesis; chorismate biosynthesis; chorismate from D-erythrose 4-phosphate and phosphoenolpyruvate: step 2/7. Catalyzes the conversion of 3-deoxy-D-arabino-heptulosonate 7-phosphate (DAHP) to dehydroquinate (DHQ). This chain is 3-dehydroquinate synthase, found in Buchnera aphidicola subsp. Baizongia pistaciae (strain Bp).